Here is a 331-residue protein sequence, read N- to C-terminus: Aspartate carbamoyltransferase catalytic subunit (331 aa).

Residues arginine 76 and threonine 77 each coordinate carbamoyl phosphate. Lysine 104 is a binding site for L-aspartate. Residues arginine 126, histidine 154, and glutamine 157 each contribute to the carbamoyl phosphate site. Residues arginine 187 and arginine 246 each contribute to the L-aspartate site. Carbamoyl phosphate-binding residues include glycine 287 and proline 288.

It belongs to the aspartate/ornithine carbamoyltransferase superfamily. ATCase family. In terms of assembly, heterododecamer (2C3:3R2) of six catalytic PyrB chains organized as two trimers (C3), and six regulatory PyrI chains organized as three dimers (R2).

It carries out the reaction carbamoyl phosphate + L-aspartate = N-carbamoyl-L-aspartate + phosphate + H(+). The protein operates within pyrimidine metabolism; UMP biosynthesis via de novo pathway; (S)-dihydroorotate from bicarbonate: step 2/3. Its function is as follows. Catalyzes the condensation of carbamoyl phosphate and aspartate to form carbamoyl aspartate and inorganic phosphate, the committed step in the de novo pyrimidine nucleotide biosynthesis pathway. The sequence is that of Aspartate carbamoyltransferase catalytic subunit from Dehalococcoides mccartyi (strain CBDB1).